Here is a 115-residue protein sequence, read N- to C-terminus: U3-lycotoxin-Ls1k (115 aa).

The N-terminal stretch at 1 to 20 (MKFVLLFGVLLVTLFSYSSA) is a signal peptide. A propeptide spanning residues 21–44 (EMFDDFDQADEDELLSLIEKEEAR) is cleaved from the precursor. Cystine bridges form between Cys-48-Cys-63, Cys-55-Cys-72, Cys-62-Cys-87, and Cys-74-Cys-85.

Belongs to the neurotoxin 19 (CSTX) family. 01 subfamily. Expressed by the venom gland.

Its subcellular location is the secreted. The polypeptide is U3-lycotoxin-Ls1k (Lycosa singoriensis (Wolf spider)).